An 81-amino-acid polypeptide reads, in one-letter code: Carboxysome shell vertex protein CsoS4B (81 aa).

Residues 1–77 (MEVMRVRSDL…TDLTIGGIID (77 aa)) enclose the BMV domain.

The protein belongs to the CcmL/EutN family. CsoS4 subfamily. As to quaternary structure, homopentamer.

It is found in the carboxysome. Probably forms vertices in the carboxysome. Has been modeled to induce curvature upon insertion into an otherwise flat hexagonal layer of major carboxysome subunits. A minor shell protein, only 12 pentamers of CsoS4A/CsoS4B are calculated to be present in each carboxysome. The 2 CsoS4 proteins contribute to the impermeability of the carboxysome to CO(2). Its central pore is probably too small to allow passage of metabolites; its function might be to anchor different proteins or metabolites to the carboxysome. Functionally, unlike beta-carboxysomes, alpha-carboxysomes (Cb) can form without cargo protein. CsoS2 is essential for Cb formation and is also capable of targeting foreign proteins to the Cb. The Cb shell assembles with the aid of CsoS2; CsoS1A, CsoS1B and CsoS1C form the majority of the shell while CsoS4A and CsoS4B form vertices. CsoS1D forms pseudohexamers that probably control metabolite flux into and out of the shell. This Halothiobacillus neapolitanus (strain ATCC 23641 / c2) (Thiobacillus neapolitanus) protein is Carboxysome shell vertex protein CsoS4B.